A 448-amino-acid chain; its full sequence is tRNA(Ile)-lysidine synthase (448 aa).

Ser-25 to Ser-30 lines the ATP pocket.

It belongs to the tRNA(Ile)-lysidine synthase family.

It localises to the cytoplasm. The catalysed reaction is cytidine(34) in tRNA(Ile2) + L-lysine + ATP = lysidine(34) in tRNA(Ile2) + AMP + diphosphate + H(+). Functionally, ligates lysine onto the cytidine present at position 34 of the AUA codon-specific tRNA(Ile) that contains the anticodon CAU, in an ATP-dependent manner. Cytidine is converted to lysidine, thus changing the amino acid specificity of the tRNA from methionine to isoleucine. This is tRNA(Ile)-lysidine synthase from Brucella canis (strain ATCC 23365 / NCTC 10854 / RM-666).